A 424-amino-acid chain; its full sequence is Serine/threonine-protein kinase H1 (424 aa).

Glycine 2 carries the N-myristoyl glycine lipid modification. Cysteine 3 is lipidated: S-palmitoyl cysteine. The segment at 56-80 (SQYAHPCPGPPTAGHTEPPSEPPRR) is disordered. The Protein kinase domain occupies 98 to 355 (YDIKALIGRG…ALQALRHPWV (258 aa)). Residues 104 to 112 (IGRGSFSRV) and lysine 127 each bind ATP. Catalysis depends on aspartate 218, which acts as the Proton acceptor. Positions 378-407 (RASSRCQSTKSAQSTRSSRSTRSNKSRRVR) are disordered. Residues serine 380 and serine 381 each carry the phosphoserine; by autocatalysis modification. The segment covering 385–398 (STKSAQSTRSSRST) has biased composition (low complexity).

Belongs to the protein kinase superfamily. CAMK Ser/Thr protein kinase family. As to quaternary structure, homodimer. In terms of processing, autophosphorylated on serine residues. Post-translationally, myristoylated. Required for membrane association. Prerequisite for palmitoylation to occur. Palmitoylated. Expressed in all tissues and cell lines tested with the highest level of abundance in testis.

The protein localises to the golgi apparatus. The protein resides in the cytoplasm. It localises to the cytoskeleton. It is found in the microtubule organizing center. Its subcellular location is the centrosome. The protein localises to the nucleus speckle. The protein resides in the endoplasmic reticulum membrane. It localises to the cell membrane. It catalyses the reaction L-seryl-[protein] + ATP = O-phospho-L-seryl-[protein] + ADP + H(+). The catalysed reaction is L-threonyl-[protein] + ATP = O-phospho-L-threonyl-[protein] + ADP + H(+). With respect to regulation, activity depends on Ca(2+) concentration. Serine/threonine protein kinase that may be involved in the regulation of pre-mRNA processing. It may phosphorylate components of nuclear splice factor compartments (SFC), such as non-snRNP splicing factors containing a serine/arginine-rich domain (SR proteins). Reversible phosphorylation of SR proteins may cause their release into the nucleoplasm and change their local concentration, thereby influencing alternative splicing. This Homo sapiens (Human) protein is Serine/threonine-protein kinase H1 (PSKH1).